The chain runs to 494 residues: Monocarboxylate transporter 1 (494 aa).

The Cytoplasmic portion of the chain corresponds to 1-22 (MPPAIGGPVGYTPPDGGWGWAV). The chain crosses the membrane as a helical span at residues 23 to 44 (VVGAFISIGFSYAFPKSITVFF). A (S)-lactate-binding site is contributed by K38. At 45-55 (KEIEIIFSATT) the chain is on the extracellular side. Residues 56-80 (SEVSWISSIMLAVMYAGGPISSILV) form a helical membrane-spanning segment. Residues 81-84 (NKYG) lie on the Cytoplasmic side of the membrane. A helical membrane pass occupies residues 85 to 105 (SRPVMIAGGCLSGCGLIAASF). Residues 106-109 (CNTV) lie on the Extracellular side of the membrane. The helical transmembrane segment at 110–132 (QELYFCIGVIGGLGLAFNLNPAL) threads the bilayer. Topologically, residues 133-146 (TMIGKYFYKKRPLA) are cytoplasmic. Residues 147 to 169 (NGLAMAGSPVFLSTLAPLNQAFF) form a helical membrane-spanning segment. The Extracellular portion of the chain corresponds to 170–174 (GIFGW). Residues 175–194 (RGSFLILGGLLLNCCVAGSL) form a helical membrane-spanning segment. Topologically, residues 195–254 (MRPIGPQQGKVEKLKSKESLQEAGKSDANTDLIGGSPKGEKLSVFQTVNKFLDLSLFTHR) are cytoplasmic. 3 positions are modified to phosphoserine: S210, S213, and S220. The residue at position 224 (T224) is a Phosphothreonine. Residue S230 is modified to Phosphoserine. The helical transmembrane segment at 255–281 (GFLLYLSGNVVMFFGLFTPLVFLSNYG) threads the bilayer. At 282–288 (KSKHFSS) the chain is on the extracellular side. Residues 289 to 310 (EKSAFLLSILAFVDMVARPSMG) form a helical membrane-spanning segment. D302 contacts H(+). R306 serves as a coordination point for (S)-lactate. Residues 311–321 (LAANTRWIRPR) lie on the Cytoplasmic side of the membrane. A helical transmembrane segment spans residues 322 to 342 (VQYFFAASVVANGVCHLLAPL). At 343–346 (STTY) the chain is on the extracellular side. The chain crosses the membrane as a helical span at residues 347–368 (VGFCIYAGVFGFAFGWLSSVLF). Residues 369-382 (ETLMDLVGPQRFSS) lie on the Cytoplasmic side of the membrane. The chain crosses the membrane as a helical span at residues 383–403 (AVGLVTIVECCPVLLGPPLLG). Residues 404–414 (RLNDMYGDYKY) are Extracellular-facing. The helical transmembrane segment at 415 to 436 (TYWACGVILIIAGLYLFIGMGI) threads the bilayer. Residues 437-494 (NYRLVAKEQKAEEKKRDGKEDETSTDVDEKPKKTMKETQSPAPLQNSSGDPAEEESPV) lie on the Cytoplasmic side of the membrane. Over residues 446–472 (KAEEKKRDGKEDETSTDVDEKPKKTMK) the composition is skewed to basic and acidic residues. The tract at residues 446–494 (KAEEKKRDGKEDETSTDVDEKPKKTMKETQSPAPLQNSSGDPAEEESPV) is disordered. Position 459 is a phosphothreonine (T459). Phosphoserine is present on S460. The residue at position 461 (T461) is a Phosphothreonine. The segment covering 473 to 485 (ETQSPAPLQNSSG) has biased composition (polar residues). 4 positions are modified to phosphoserine: S476, S483, S484, and S492.

The protein belongs to the major facilitator superfamily. Monocarboxylate porter (TC 2.A.1.13) family. In terms of assembly, interacts with BSG. Interacts with EMB. Interaction with either BSG or EMB is required for expression at the cell membrane. Detected in erythrocytes (at protein level). Detected in brain, heart, kidney, lung, muscle, jejunum enterocytes and brain capillaries.

It is found in the cell membrane. It localises to the basolateral cell membrane. The protein resides in the apical cell membrane. It carries out the reaction (S)-lactate(in) + H(+)(in) = (S)-lactate(out) + H(+)(out). It catalyses the reaction pyruvate(out) + H(+)(out) = pyruvate(in) + H(+)(in). The catalysed reaction is acetoacetate(out) + H(+)(out) = acetoacetate(in) + H(+)(in). The enzyme catalyses (S)-3-hydroxybutanoate(out) + H(+)(out) = (S)-3-hydroxybutanoate(in) + H(+)(in). It carries out the reaction (R)-3-hydroxybutanoate(out) + H(+)(out) = (R)-3-hydroxybutanoate(in) + H(+)(in). It catalyses the reaction 3-methyl-2-oxobutanoate(out) + H(+)(out) = 3-methyl-2-oxobutanoate(in) + H(+)(in). The catalysed reaction is 4-methyl-2-oxopentanoate(out) + H(+)(out) = 4-methyl-2-oxopentanoate(in) + H(+)(in). With respect to regulation, inhibited by stilbene disulfonates, such as di-isothiocyanostilbene disulfonate(DIDS), a cross-linking reagent that forms covalent linkages with lysine groups. Functionally, bidirectional proton-coupled monocarboxylate transporter. Catalyzes the rapid transport across the plasma membrane of many monocarboxylates such as lactate, pyruvate, acetate and the ketone bodies acetoacetate and beta-hydroxybutyrate, and thus contributes to the maintenance of intracellular pH. The transport direction is determined by the proton motive force and the concentration gradient of the substrate monocarboxylate. MCT1 is a major lactate exporter. Plays a role in cellular responses to a high-fat diet by modulating the cellular levels of lactate and pyruvate that contribute to the regulation of central metabolic pathways and insulin secretion, with concomitant effects on plasma insulin levels and blood glucose homeostasis. Facilitates the protonated monocarboxylate form of succinate export, that its transient protonation upon muscle cell acidification in exercising muscle and ischemic heart. Functions via alternate outward- and inward-open conformation states. Protonation and deprotonation of 302-Asp is essential for the conformational transition. The polypeptide is Monocarboxylate transporter 1 (Slc16a1) (Rattus norvegicus (Rat)).